The primary structure comprises 147 residues: Protein YjdN (147 aa).

The chain is Protein YjdN (yjdN) from Escherichia coli (strain K12).